We begin with the raw amino-acid sequence, 663 residues long: Alcohol oxidase (663 aa).

8–39 (DVIVCGGGSTGCVIAGRLANVDENLKVLLIEN) contacts FAD. Residue H567 is the Proton acceptor of the active site. The Microbody targeting signal motif lies at 661-663 (ARY).

The protein belongs to the GMC oxidoreductase family. As to quaternary structure, homooctamer. FAD serves as cofactor.

The protein resides in the peroxisome matrix. The enzyme catalyses a primary alcohol + O2 = an aldehyde + H2O2. It functions in the pathway energy metabolism; methane degradation. Its function is as follows. Catalyzes the oxidation of methanol to formaldehyde and hydrogen peroxide, the first step in the methanol utilization pathway of methylotrophic yeasts. This is Alcohol oxidase (AOD1) from Candida boidinii (Yeast).